We begin with the raw amino-acid sequence, 267 residues long: 5'-nucleotidase SurE (267 aa).

Residues aspartate 9, aspartate 10, serine 40, and asparagine 97 each contribute to the a divalent metal cation site.

This sequence belongs to the SurE nucleotidase family. A divalent metal cation is required as a cofactor.

It localises to the cytoplasm. The enzyme catalyses a ribonucleoside 5'-phosphate + H2O = a ribonucleoside + phosphate. In terms of biological role, nucleotidase that shows phosphatase activity on nucleoside 5'-monophosphates. In Helicobacter pylori (strain P12), this protein is 5'-nucleotidase SurE.